We begin with the raw amino-acid sequence, 112 residues long: Cytochrome c type-1 (112 aa).

Positions 20, 23, 24, and 85 each coordinate heme c.

In terms of processing, binds 1 heme c group covalently per subunit.

It is found in the mitochondrion intermembrane space. Electron carrier between complex III (ubiquinol-cytochrome c oxireductase) and complex IV (cytochrome c oxidase). This is Cytochrome c type-1 from Ascaris suum (Pig roundworm).